A 523-amino-acid polypeptide reads, in one-letter code: Sorting nexin-2 (523 aa).

A disordered region spans residues 1–104; that stretch reads MAAEREPPPL…EPSPAVTPVT (104 aa). Composition is skewed to low complexity over residues 27–50 and 93–104; these read LFTS…LPAE and SSEPSPAVTPVT. Residue serine 97 is modified to Phosphoserine. Threonine 101 and threonine 104 each carry phosphothreonine. A phosphoserine mark is found at serine 117 and serine 119. The 130-residue stretch at 140–269 folds into the PX domain; the sequence is FDIEIGVSDP…QFLESSELPR (130 aa). Positions 183, 185, 211, and 235 each coordinate a 1,2-diacyl-sn-glycero-3-phospho-(1D-myo-inositol-3-phosphate). Phosphoserine is present on serine 185. Residues 260–523 are interaction with RhoG; it reads QFLESSELPR…AFLPEAKAIA (264 aa). Serine 277 bears the Phosphoserine mark. Positions 278 to 295 are membrane-binding amphipathic helix; that stretch reads GAGILRMVNKAADAVNKM. The 225-residue stretch at 299-523 folds into the BAR domain; it reads MNESDAWFEE…AFLPEAKAIA (225 aa). An N6-acetyllysine modification is found at lysine 473.

Belongs to the sorting nexin family. As to quaternary structure, predominantly forms heterodimers with BAR domain-containing sorting nexins SNX5, SNX6 and SNX32; can self-associate to form homodimers. The heterodimers are proposed to self-assemble into helical arrays on the membrane to stabilize and expand local membrane curvature underlying endosomal tubule formation. Thought to be a component of the originally described retromer complex (also called SNX-BAR retromer) which is a pentamer containing the heterotrimeric retromer cargo-selective complex (CSC), also described as vacuolar protein sorting subcomplex (VPS), and a heterodimeric membrane-deforming subcomplex formed between SNX1 or SNX2 and SNX5 or SNX6 (also called SNX-BAR subcomplex); the respective CSC and SNX-BAR subcomplexes associate with low affinity. Interacts with SNX5, SNX6, SNX32, VPS26A, VPS29, VPS35, FNBP1, KALRN, RHOG (GDP-bound form).

Its subcellular location is the early endosome membrane. It is found in the cell projection. It localises to the lamellipodium. In terms of biological role, involved in several stages of intracellular trafficking. Interacts with membranes containing phosphatidylinositol 3-phosphate (PtdIns(3P)) or phosphatidylinositol 3,5-bisphosphate (PtdIns(3,5)P2). Acts in part as component of the retromer membrane-deforming SNX-BAR subcomplex. The SNX-BAR retromer mediates retrograde transport of cargo proteins from endosomes to the trans-Golgi network (TGN) and is involved in endosome-to-plasma membrane transport for cargo protein recycling. The SNX-BAR subcomplex functions to deform the donor membrane into a tubular profile called endosome-to-TGN transport carrier (ETC). Can sense membrane curvature and has in vitro vesicle-to-membrane remodeling activity. Required for retrograde endosome-to-TGN transport of TGN38. Promotes KALRN- and RHOG-dependent but retromer-independent membrane remodeling such as lamellipodium formation; the function is dependent on GEF activity of KALRN. This is Sorting nexin-2 (SNX2) from Macaca fascicularis (Crab-eating macaque).